The primary structure comprises 121 residues: Basic phospholipase A2 caudoxin (121 aa).

Cystine bridges form between C25/C114, C27/C43, C42/C94, C48/C121, C49/C87, C56/C80, and C74/C85. Positions 26, 28, and 30 each coordinate Ca(2+). The active site involves H46. D47 provides a ligand contact to Ca(2+). The active site involves D88.

Belongs to the phospholipase A2 family. Group II subfamily. D49 sub-subfamily. As to quaternary structure, monomer. The cofactor is Ca(2+). Expressed by the venom gland.

Its subcellular location is the secreted. It catalyses the reaction a 1,2-diacyl-sn-glycero-3-phosphocholine + H2O = a 1-acyl-sn-glycero-3-phosphocholine + a fatty acid + H(+). Functionally, snake venom phospholipase A2 (PLA2) that shows anticoagulant activity and presynaptic neurotoxicity. Acts as an anticoagulant toxin by inhibiting prothrombinase complex formation. Shows about 50% of the prothrombinase complex inhibition compared to CM-IV of N.nigricollis venom. Acts as a neurotoxin by inhibiting neuromuscular transmission by blocking acetylcholine release from the nerve termini. PLA2 catalyzes the calcium-dependent hydrolysis of the 2-acyl groups in 3-sn-phosphoglycerides. The sequence is that of Basic phospholipase A2 caudoxin from Bitis caudalis (Horned adder).